The chain runs to 729 residues: Polyribonucleotide nucleotidyltransferase (729 aa).

Positions 516 and 522 each coordinate Mg(2+). The region spanning 581 to 641 (PSTEHFSINP…EKVAAAKEHI (61 aa)) is the KH domain. In terms of domain architecture, S1 motif spans 658–725 (GKTYVGKVKK…KGKKVELATP (68 aa)).

The protein belongs to the polyribonucleotide nucleotidyltransferase family. The cofactor is Mg(2+).

It localises to the cytoplasm. The enzyme catalyses RNA(n+1) + phosphate = RNA(n) + a ribonucleoside 5'-diphosphate. Its function is as follows. Involved in mRNA degradation. Catalyzes the phosphorolysis of single-stranded polyribonucleotides processively in the 3'- to 5'-direction. The sequence is that of Polyribonucleotide nucleotidyltransferase from Sulfurovum sp. (strain NBC37-1).